We begin with the raw amino-acid sequence, 521 residues long: Bifunctional purine biosynthesis protein PurH (521 aa).

The 145-residue stretch at methionine 1–valine 145 folds into the MGS-like domain.

The protein belongs to the PurH family.

The enzyme catalyses (6R)-10-formyltetrahydrofolate + 5-amino-1-(5-phospho-beta-D-ribosyl)imidazole-4-carboxamide = 5-formamido-1-(5-phospho-D-ribosyl)imidazole-4-carboxamide + (6S)-5,6,7,8-tetrahydrofolate. The catalysed reaction is IMP + H2O = 5-formamido-1-(5-phospho-D-ribosyl)imidazole-4-carboxamide. It participates in purine metabolism; IMP biosynthesis via de novo pathway; 5-formamido-1-(5-phospho-D-ribosyl)imidazole-4-carboxamide from 5-amino-1-(5-phospho-D-ribosyl)imidazole-4-carboxamide (10-formyl THF route): step 1/1. The protein operates within purine metabolism; IMP biosynthesis via de novo pathway; IMP from 5-formamido-1-(5-phospho-D-ribosyl)imidazole-4-carboxamide: step 1/1. In Burkholderia orbicola (strain MC0-3), this protein is Bifunctional purine biosynthesis protein PurH.